We begin with the raw amino-acid sequence, 67 residues long: Large ribosomal subunit protein bL35 (67 aa).

Residues 1–16 (MPKMKTKKSAAKRFRV) are compositionally biased toward basic residues. The interval 1–22 (MPKMKTKKSAAKRFRVRPGGTV) is disordered.

The protein belongs to the bacterial ribosomal protein bL35 family.

This is Large ribosomal subunit protein bL35 from Methylibium petroleiphilum (strain ATCC BAA-1232 / LMG 22953 / PM1).